Consider the following 290-residue polypeptide: Pirin (290 aa).

4 residues coordinate Fe cation: H56, H58, H101, and E103.

Belongs to the pirin family. As to quaternary structure, may interact with NF1/CTF1. Interacts with BCL3. Identified in a complex comprised of PIR, BLC3, NFKB1 and target DNA. Fe cation is required as a cofactor. In terms of tissue distribution, weakly expressed in bone marrow.

Its subcellular location is the nucleus. The protein resides in the cytoplasm. The enzyme catalyses quercetin + O2 = 2-(3,4-dihydroxybenzoyloxy)-4,6-dihydroxybenzoate + CO. Its pathway is flavonoid metabolism; quercetin degradation. Its function is as follows. Transcriptional coregulator of NF-kappa-B which facilitates binding of NF-kappa-B proteins to target kappa-B genes in a redox-state-dependent manner. May be required for efficient terminal myeloid maturation of hematopoietic cells. Has quercetin 2,3-dioxygenase activity (in vitro). This is Pirin (Pir) from Mus musculus (Mouse).